Here is a 542-residue protein sequence, read N- to C-terminus: Phosphoacetylglucosamine mutase 2 (542 aa).

The active-site Phosphoserine intermediate is Ser-77. Ser-77 contributes to the Mg(2+) binding site. 2 positions are modified to phosphoserine: Ser-77 and Ser-82. 3 residues coordinate Mg(2+): Asp-292, Asp-294, and Asp-296. Substrate is bound by residues 385–387, 510–514, and Arg-519; these read EAN and RSSGT.

Belongs to the phosphohexose mutase family. Mg(2+) serves as cofactor.

It localises to the cytoplasm. The protein resides in the nucleus. It catalyses the reaction N-acetyl-alpha-D-glucosamine 1-phosphate = N-acetyl-D-glucosamine 6-phosphate. Its pathway is nucleotide-sugar biosynthesis; UDP-N-acetyl-alpha-D-glucosamine biosynthesis; N-acetyl-alpha-D-glucosamine 1-phosphate from alpha-D-glucosamine 6-phosphate (route I): step 2/2. Functionally, catalyzes the conversion of GlcNAc-6-P into GlcNAc-1-P during the synthesis of uridine diphosphate/UDP-GlcNAc, which is a biosynthetic precursor of chitin and also supplies the amino sugars for N-linked oligosaccharides of glycoproteins. This chain is Phosphoacetylglucosamine mutase 2, found in Schizosaccharomyces pombe (strain 972 / ATCC 24843) (Fission yeast).